Reading from the N-terminus, the 360-residue chain is Probable mannan endo-1,4-beta-mannosidase A (360 aa).

An N-terminal signal peptide occupies residues 1–18 (MKLSQILTFASLLSGALA). Substrate contacts are provided by Asn-142 and Asn-178. Glu-179 (proton donor) is an active-site residue. Tyr-254 contacts substrate. Residue Glu-287 is the Nucleophile of the active site. An N-linked (GlcNAc...) asparagine glycan is attached at Asn-307. Trp-317 serves as a coordination point for substrate.

Belongs to the glycosyl hydrolase 5 (cellulase A) family.

Its subcellular location is the secreted. It catalyses the reaction Random hydrolysis of (1-&gt;4)-beta-D-mannosidic linkages in mannans, galactomannans and glucomannans.. Functionally, endo-1,4-mannanase, a crucial enzyme for depolymerization of seed galactomannans and wood galactoglucomannans. The polypeptide is Probable mannan endo-1,4-beta-mannosidase A (manA) (Aspergillus clavatus (strain ATCC 1007 / CBS 513.65 / DSM 816 / NCTC 3887 / NRRL 1 / QM 1276 / 107)).